The following is a 148-amino-acid chain: Receptor activity-modifying protein 1 (148 aa).

The N-terminal stretch at 1–26 (MAPGLRGLPRCGLWLLLAHHLFMVTA) is a signal peptide. 3 disulfides stabilise this stretch: Cys-27–Cys-82, Cys-40–Cys-72, and Cys-57–Cys-104. Over 27-118 (CRDPDYGTLI…RALRDPPNSI (92 aa)) the chain is Extracellular. Residues 119-140 (LCPFIALPITVTLLMTALVVWR) traverse the membrane as a helical segment. Over 141–148 (SKRTEGIV) the chain is Cytoplasmic.

It belongs to the RAMP family. As to quaternary structure, heterodimer of CALCRL and RAMP1; the interaction induces allosteric modulation of CALCRL function and CGRP1/CALCA and CGRP2/CALCB ligand specificity. Heterodimer of CALCR and RAMP1; interaction forms the AMYR1 receptor complex for amylin/IAPP and CGRP1/CALCA ligands. Expressed predominantly in the thymus, skeletal muscle, embryonic and adult brain, embryonic and adult lung, and colon.

Its subcellular location is the cell membrane. Functionally, accessory protein that interacts with and modulates the function of G-protein coupled receptors including calcitonin gene-related peptide type 1 receptor (CALCRL) and calcitonin receptor (CALCR). Required for the transport of CALCRL to the plasma membrane. Together with CALCRL, form the receptor complex for the calcitonin gene-related peptides CGRP1/CALCA and CGRP2/CALCB. Together with CALCR, form the AMYR1 receptor complex for amylin/IAPP and CGRP1/CALCA. The protein is Receptor activity-modifying protein 1 of Mus musculus (Mouse).